The primary structure comprises 294 residues: tRNA dimethylallyltransferase (294 aa).

10-17 lines the ATP pocket; sequence GPTAVGKT. 12-17 contacts substrate; that stretch reads TAVGKT. Positions 35 to 38 are interaction with substrate tRNA; sequence DSQQ.

Belongs to the IPP transferase family. Monomer. Mg(2+) serves as cofactor.

The catalysed reaction is adenosine(37) in tRNA + dimethylallyl diphosphate = N(6)-dimethylallyladenosine(37) in tRNA + diphosphate. In terms of biological role, catalyzes the transfer of a dimethylallyl group onto the adenine at position 37 in tRNAs that read codons beginning with uridine, leading to the formation of N6-(dimethylallyl)adenosine (i(6)A). In Streptococcus pneumoniae (strain Taiwan19F-14), this protein is tRNA dimethylallyltransferase.